Here is a 188-residue protein sequence, read N- to C-terminus: Ribose 1,5-bisphosphate phosphokinase PhnN (188 aa).

9–16 (GPSGAGKD) contributes to the ATP binding site.

This sequence belongs to the ribose 1,5-bisphosphokinase family.

It carries out the reaction alpha-D-ribose 1,5-bisphosphate + ATP = 5-phospho-alpha-D-ribose 1-diphosphate + ADP. The protein operates within metabolic intermediate biosynthesis; 5-phospho-alpha-D-ribose 1-diphosphate biosynthesis; 5-phospho-alpha-D-ribose 1-diphosphate from D-ribose 5-phosphate (route II): step 3/3. In terms of biological role, catalyzes the phosphorylation of ribose 1,5-bisphosphate to 5-phospho-D-ribosyl alpha-1-diphosphate (PRPP). The chain is Ribose 1,5-bisphosphate phosphokinase PhnN from Pectobacterium parmentieri (strain WPP163) (Pectobacterium wasabiae (strain WPP163)).